Here is a 453-residue protein sequence, read N- to C-terminus: Elongation factor 1-alpha (453 aa).

The 226-residue stretch at 5–230 (KTHINIVVIG…DAIVEPKRPH (226 aa)) folds into the tr-type G domain. Positions 14–21 (GHVDAGKS) are G1. 14–21 (GHVDAGKS) lines the GTP pocket. The segment at 70 to 74 (GITID) is G2. The segment at 91–94 (DAPG) is G3. GTP-binding positions include 91–95 (DAPGH) and 153–156 (NKMD). Positions 153–156 (NKMD) are G4. The segment at 194–196 (SGW) is G5.

It belongs to the TRAFAC class translation factor GTPase superfamily. Classic translation factor GTPase family. EF-Tu/EF-1A subfamily. In terms of assembly, binds to actin.

It localises to the cytoplasm. Functionally, this protein promotes the GTP-dependent binding of aminoacyl-tRNA to the A-site of ribosomes during protein biosynthesis. It is also an abundant actin filament bundling protein. The sequence is that of Elongation factor 1-alpha (eef1a2) from Dictyostelium discoideum (Social amoeba).